A 218-amino-acid chain; its full sequence is Ribonuclease HII (218 aa).

The region spanning 23 to 216 (RFLCGVDEAG…VREAIARGLV (194 aa)) is the RNase H type-2 domain. A divalent metal cation contacts are provided by aspartate 29, glutamate 30, and aspartate 125.

This sequence belongs to the RNase HII family. The cofactor is Mn(2+). Mg(2+) serves as cofactor.

It is found in the cytoplasm. The catalysed reaction is Endonucleolytic cleavage to 5'-phosphomonoester.. Its function is as follows. Endonuclease that specifically degrades the RNA of RNA-DNA hybrids. The protein is Ribonuclease HII of Cupriavidus pinatubonensis (strain JMP 134 / LMG 1197) (Cupriavidus necator (strain JMP 134)).